The chain runs to 308 residues: Ornithine carbamoyltransferase (308 aa).

Carbamoyl phosphate contacts are provided by residues 56–59 (STRT), Gln83, Arg107, and 134–137 (HPCQ). L-ornithine-binding positions include Asn165, Asp225, and 229-230 (SM). Residues 266–267 (CL) and Arg294 each bind carbamoyl phosphate.

This sequence belongs to the aspartate/ornithine carbamoyltransferase superfamily. OTCase family.

The protein resides in the cytoplasm. It catalyses the reaction carbamoyl phosphate + L-ornithine = L-citrulline + phosphate + H(+). The protein operates within amino-acid biosynthesis; L-arginine biosynthesis; L-arginine from L-ornithine and carbamoyl phosphate: step 1/3. Reversibly catalyzes the transfer of the carbamoyl group from carbamoyl phosphate (CP) to the N(epsilon) atom of ornithine (ORN) to produce L-citrulline. The polypeptide is Ornithine carbamoyltransferase (Cereibacter sphaeroides (strain ATCC 17023 / DSM 158 / JCM 6121 / CCUG 31486 / LMG 2827 / NBRC 12203 / NCIMB 8253 / ATH 2.4.1.) (Rhodobacter sphaeroides)).